We begin with the raw amino-acid sequence, 246 residues long: Sulfate transporter CysZ (246 aa).

Transmembrane regions (helical) follow at residues 24-44 (LFVL…IGFA), 69-89 (IVWP…FTMV), 148-168 (LLVL…WILF), and 214-234 (LLIP…ATLF).

The protein belongs to the CysZ family.

The protein resides in the cell inner membrane. In terms of biological role, high affinity, high specificity proton-dependent sulfate transporter, which mediates sulfate uptake. Provides the sulfur source for the cysteine synthesis pathway. This chain is Sulfate transporter CysZ, found in Pseudomonas paraeruginosa (strain DSM 24068 / PA7) (Pseudomonas aeruginosa (strain PA7)).